The sequence spans 461 residues: Asparagine--tRNA ligase (461 aa).

This sequence belongs to the class-II aminoacyl-tRNA synthetase family. As to quaternary structure, homodimer.

The protein resides in the cytoplasm. It catalyses the reaction tRNA(Asn) + L-asparagine + ATP = L-asparaginyl-tRNA(Asn) + AMP + diphosphate + H(+). This is Asparagine--tRNA ligase from Nitratidesulfovibrio vulgaris (strain DP4) (Desulfovibrio vulgaris).